A 56-amino-acid chain; its full sequence is Large ribosomal subunit protein bL33 (56 aa).

It belongs to the bacterial ribosomal protein bL33 family.

The polypeptide is Large ribosomal subunit protein bL33 (rpmG) (Treponema pallidum (strain Nichols)).